The chain runs to 62 residues: High-potential iron-sulfur protein (62 aa).

[4Fe-4S] cluster contacts are provided by Cys-22, Cys-25, Cys-40, and Cys-55.

Belongs to the high-potential iron-sulfur protein (HiPIP) family. As to quaternary structure, homodimer.

In terms of biological role, specific class of high-redox-potential 4Fe-4S ferredoxins. Functions in anaerobic electron transport in most purple and in some other photosynthetic bacteria and in at least one genus (Paracoccus) of halophilic, denitrifying bacteria. The sequence is that of High-potential iron-sulfur protein (hip) from Rhodocyclus tenuis (Rhodospirillum tenue).